The sequence spans 156 residues: 6,7-dimethyl-8-ribityllumazine synthase (156 aa).

Residues Phe-28, Ala-62 to Glu-64, and Ala-86 to Ile-88 each bind 5-amino-6-(D-ribitylamino)uracil. Glu-91–Thr-92 contacts (2S)-2-hydroxy-3-oxobutyl phosphate. His-94 (proton donor) is an active-site residue. Asn-119 is a binding site for 5-amino-6-(D-ribitylamino)uracil. Arg-133 contacts (2S)-2-hydroxy-3-oxobutyl phosphate.

The protein belongs to the DMRL synthase family.

It catalyses the reaction (2S)-2-hydroxy-3-oxobutyl phosphate + 5-amino-6-(D-ribitylamino)uracil = 6,7-dimethyl-8-(1-D-ribityl)lumazine + phosphate + 2 H2O + H(+). It participates in cofactor biosynthesis; riboflavin biosynthesis; riboflavin from 2-hydroxy-3-oxobutyl phosphate and 5-amino-6-(D-ribitylamino)uracil: step 1/2. Catalyzes the formation of 6,7-dimethyl-8-ribityllumazine by condensation of 5-amino-6-(D-ribitylamino)uracil with 3,4-dihydroxy-2-butanone 4-phosphate. This is the penultimate step in the biosynthesis of riboflavin. The sequence is that of 6,7-dimethyl-8-ribityllumazine synthase from Azoarcus sp. (strain BH72).